Consider the following 106-residue polypeptide: Integration host factor subunit alpha (106 aa).

Belongs to the bacterial histone-like protein family. As to quaternary structure, heterodimer of an alpha and a beta chain.

In terms of biological role, this protein is one of the two subunits of integration host factor, a specific DNA-binding protein that functions in genetic recombination as well as in transcriptional and translational control. The polypeptide is Integration host factor subunit alpha (Nitrobacter winogradskyi (strain ATCC 25391 / DSM 10237 / CIP 104748 / NCIMB 11846 / Nb-255)).